The following is a 524-amino-acid chain: Mediator of RNA polymerase II transcription subunit 8 (524 aa).

Methionine 1 carries the post-translational modification N-acetylmethionine. A coiled-coil region spans residues 137–162 (MQIERLKARMDMIAAACENAERVLAD). Disordered regions lie at residues 291-315 (VPSP…LMQL) and 474-524 (MMQT…QNPQ). Composition is skewed to low complexity over residues 295 to 315 (QHQI…LMQL) and 474 to 505 (MMQT…TNQQ). Residues 506-524 (SLQPNNMMQNAQQRHQNPQ) are compositionally biased toward polar residues.

It belongs to the Mediator complex subunit 8 family. As to quaternary structure, component of the Mediator complex.

The protein localises to the nucleus. Its function is as follows. Component of the Mediator complex, a coactivator involved in the regulated transcription of nearly all RNA polymerase II-dependent genes. Mediator functions as a bridge to convey information from gene-specific regulatory proteins to the basal RNA polymerase II transcription machinery. The Mediator complex, having a compact conformation in its free form, is recruited to promoters by direct interactions with regulatory proteins and serves for the assembly of a functional preinitiation complex with RNA polymerase II and the general transcription factors. Regulator of both plant defense and flowering time. Involved in pollen tube growth. The polypeptide is Mediator of RNA polymerase II transcription subunit 8 (MED8) (Arabidopsis thaliana (Mouse-ear cress)).